Here is a 122-residue protein sequence, read N- to C-terminus: Co-chaperonin GroES (122 aa).

This sequence belongs to the GroES chaperonin family. In terms of assembly, heptamer of 7 subunits arranged in a ring. Interacts with the chaperonin GroEL.

Its subcellular location is the cytoplasm. In terms of biological role, together with the chaperonin GroEL, plays an essential role in assisting protein folding. The GroEL-GroES system forms a nano-cage that allows encapsulation of the non-native substrate proteins and provides a physical environment optimized to promote and accelerate protein folding. GroES binds to the apical surface of the GroEL ring, thereby capping the opening of the GroEL channel. This chain is Co-chaperonin GroES, found in Aquifex aeolicus (strain VF5).